We begin with the raw amino-acid sequence, 192 residues long: Xanthine phosphoribosyltransferase (192 aa).

Xanthine-binding residues include L20 and N27. 128 to 132 (ANGQA) serves as a coordination point for 5-phospho-alpha-D-ribose 1-diphosphate. A xanthine-binding site is contributed by K156.

This sequence belongs to the purine/pyrimidine phosphoribosyltransferase family. Xpt subfamily. Homodimer.

The protein localises to the cytoplasm. It catalyses the reaction XMP + diphosphate = xanthine + 5-phospho-alpha-D-ribose 1-diphosphate. It participates in purine metabolism; XMP biosynthesis via salvage pathway; XMP from xanthine: step 1/1. Converts the preformed base xanthine, a product of nucleic acid breakdown, to xanthosine 5'-monophosphate (XMP), so it can be reused for RNA or DNA synthesis. The sequence is that of Xanthine phosphoribosyltransferase from Listeria monocytogenes serotype 4b (strain CLIP80459).